The primary structure comprises 29 residues: U1-pseudomyrmecitoxin-Pt1 subunit SS2 (29 aa).

Belongs to the myrmexin family. As to quaternary structure, heterodimer composed of subunit SS2 and subunit LS1 (U1-PSDTX-Pt1e), and heterodimer composed of subunit SS2 and LS2 (U1-PSDTX-Pt1c); disulfide-linked. Expressed by the venom gland.

The protein localises to the secreted. In terms of biological role, this heterodimer may have anti-inflammatory properties, since the myrmexin complex (composed of 6 SS-LS heterodimers) inhibits carrageenin-induced edema in a dose-dependent manner (after subcutaneous injection into rats). The protein is U1-pseudomyrmecitoxin-Pt1 subunit SS2 of Pseudomyrmex triplarinus (Ant).